Here is a 274-residue protein sequence, read N- to C-terminus: 3',5'-cyclic adenosine monophosphate phosphodiesterase CpdA (274 aa).

Positions 21, 23, 63, 93, 163, 202, and 204 each coordinate Fe cation. AMP contacts are provided by residues His-23, Asp-63, and 93 to 94 (NH). Residue His-204 coordinates AMP.

It belongs to the cyclic nucleotide phosphodiesterase class-III family. Fe(2+) is required as a cofactor.

The enzyme catalyses 3',5'-cyclic AMP + H2O = AMP + H(+). In terms of biological role, hydrolyzes cAMP to 5'-AMP. Plays an important regulatory role in modulating the intracellular concentration of cAMP, thereby influencing cAMP-dependent processes. In Vibrio vulnificus (strain CMCP6), this protein is 3',5'-cyclic adenosine monophosphate phosphodiesterase CpdA.